A 247-amino-acid polypeptide reads, in one-letter code: Triosephosphate isomerase (247 aa).

Substrate is bound at residue 8-10 (NWK). His-95 acts as the Electrophile in catalysis. The active-site Proton acceptor is the Glu-162. Substrate is bound by residues Gly-168 and Ser-207.

This sequence belongs to the triosephosphate isomerase family. In terms of assembly, homodimer.

It localises to the cytoplasm. It carries out the reaction D-glyceraldehyde 3-phosphate = dihydroxyacetone phosphate. It participates in carbohydrate biosynthesis; gluconeogenesis. Its pathway is carbohydrate degradation; glycolysis; D-glyceraldehyde 3-phosphate from glycerone phosphate: step 1/1. In terms of biological role, involved in the gluconeogenesis. Catalyzes stereospecifically the conversion of dihydroxyacetone phosphate (DHAP) to D-glyceraldehyde-3-phosphate (G3P). This is Triosephosphate isomerase from Gluconacetobacter diazotrophicus (strain ATCC 49037 / DSM 5601 / CCUG 37298 / CIP 103539 / LMG 7603 / PAl5).